A 1433-amino-acid chain; its full sequence is Inositol hexakisphosphate and diphosphoinositol-pentakisphosphate kinase 1 (1433 aa).

Residue 64–65 participates in substrate binding; it reads KK. Residues Arg145, Lys198, His205, Arg224, 248–251, and 257–259 contribute to the ATP site; these read EEFM and DVK. 224 to 225 is a substrate binding site; it reads RK. Substrate contacts are provided by Lys259 and Arg273. Residues Ser275, Asp320, and 332-334 each bind ATP; that span reads DVN. 337–340 lines the substrate pocket; the sequence is SFVK. The interval 382–453 is polyphosphoinositide-binding domain; the sequence is PTTSGTMMEL…VLDITRLLLA (72 aa). Positions 915-1020 are disordered; the sequence is GVEEEGSAPA…PTEMKQSGLG (106 aa). Ser944 and Ser987 each carry phosphoserine. A compositionally biased stretch (polar residues) spans 1005–1020; it reads FSSSRPPTEMKQSGLG. Phosphoserine occurs at positions 1037 and 1073. Polar residues predominate over residues 1134 to 1143; it reads MHSSQASDNP. 2 disordered regions span residues 1134–1199 and 1235–1257; these read MHSS…DQPS and EPNQSPQVPPMETSQPYEEVSQP. A phosphoserine mark is found at Ser1145 and Ser1152. Residues 1168–1186 show a composition bias toward low complexity; it reads SSGPSSTVSSAGPSSPTTV. 2 stretches are compositionally biased toward polar residues: residues 1187-1199 and 1236-1250; these read DGNSQFGFSDQPS and PNQSPQVPPMETSQP.

This sequence belongs to the histidine acid phosphatase family. VIP1 subfamily. In terms of tissue distribution, widely expressed, with a higher expression in skeletal muscle, heart and brain.

It localises to the cytoplasm. It is found in the cytosol. The protein localises to the cell membrane. It carries out the reaction 1D-myo-inositol hexakisphosphate + ATP = 1-diphospho-1D-myo-inositol 2,3,4,5,6-pentakisphosphate + ADP. The enzyme catalyses 5-diphospho-1D-myo-inositol 1,2,3,4,6-pentakisphosphate + ATP + H(+) = 1,5-bis(diphospho)-1D-myo-inositol 2,3,4,6-tetrakisphosphate + ADP. Its function is as follows. Bifunctional inositol kinase that acts in concert with the IP6K kinases IP6K1, IP6K2 and IP6K3 to synthesize the diphosphate group-containing inositol pyrophosphates diphosphoinositol pentakisphosphate, PP-InsP5, and bis-diphosphoinositol tetrakisphosphate, (PP)2-InsP4. PP-InsP5 and (PP)2-InsP4, also respectively called InsP7 and InsP8, regulate a variety of cellular processes, including apoptosis, vesicle trafficking, cytoskeletal dynamics, exocytosis, insulin signaling and neutrophil activation. Phosphorylates inositol hexakisphosphate (InsP6) at position 1 to produce PP-InsP5 which is in turn phosphorylated by IP6Ks to produce (PP)2-InsP4. Alternatively, phosphorylates PP-InsP5 at position 1, produced by IP6Ks from InsP6, to produce (PP)2-InsP4. Activated when cells are exposed to hyperosmotic stress. This chain is Inositol hexakisphosphate and diphosphoinositol-pentakisphosphate kinase 1, found in Homo sapiens (Human).